The primary structure comprises 297 residues: Tyrosine recombinase XerD (297 aa).

The Core-binding (CB) domain occupies 1-86 (MNDLIEDFLH…SLRSFFHYLM (86 aa)). Residues 107 to 291 (GLPKVLNLDD…TKLRLKDVYK (185 aa)) enclose the Tyr recombinase domain. Residues R147, K171, H243, R246, and H269 contribute to the active site. Y278 functions as the O-(3'-phospho-DNA)-tyrosine intermediate in the catalytic mechanism.

This sequence belongs to the 'phage' integrase family. XerD subfamily. In terms of assembly, forms a cyclic heterotetrameric complex composed of two molecules of XerC and two molecules of XerD.

The protein resides in the cytoplasm. Site-specific tyrosine recombinase, which acts by catalyzing the cutting and rejoining of the recombining DNA molecules. The XerC-XerD complex is essential to convert dimers of the bacterial chromosome into monomers to permit their segregation at cell division. It also contributes to the segregational stability of plasmids. This is Tyrosine recombinase XerD from Listeria monocytogenes serovar 1/2a (strain ATCC BAA-679 / EGD-e).